A 477-amino-acid chain; its full sequence is Methionine aminopeptidase 2 (477 aa).

Residues Met-1 to Asp-121 form a disordered region. Ala-2 bears the N-acetylalanine mark. A compositionally biased stretch (basic residues) spans Lys-36–Lys-46. Ser-45 carries the phosphoserine modification. Over residues Glu-54–Lys-78 the composition is skewed to basic and acidic residues. Residue Ser-62 is modified to Phosphoserine; alternate. Ser-62 is a glycosylation site (O-linked (GlcNAc) serine; alternate). Acidic residues predominate over residues Glu-79–Gly-91. Residues Gly-96–Pro-108 show a composition bias toward basic residues. His-230 is a substrate binding site. Residues Asp-250, Asp-261, and His-330 each coordinate a divalent metal cation. A substrate-binding site is contributed by His-338. Residues Glu-363 and Glu-458 each contribute to the a divalent metal cation site.

The protein belongs to the peptidase M24A family. Methionine aminopeptidase eukaryotic type 2 subfamily. As to quaternary structure, binds EIF2S1 at low magnesium concentrations. Interacts strongly with the eIF-2 gamma-subunit EIF2S3. Requires Co(2+) as cofactor. The cofactor is Zn(2+). Mn(2+) is required as a cofactor. Fe(2+) serves as cofactor. Contains approximately 12 O-linked N-acetylglucosamine (GlcNAc) residues. O-glycosylation is required for EIF2S1 binding.

It localises to the cytoplasm. It carries out the reaction Release of N-terminal amino acids, preferentially methionine, from peptides and arylamides.. Functionally, cotranslationally removes the N-terminal methionine from nascent proteins. The N-terminal methionine is often cleaved when the second residue in the primary sequence is small and uncharged (Met-Ala-, Cys, Gly, Pro, Ser, Thr, or Val). In terms of biological role, protects eukaryotic initiation factor EIF2S1 from translation-inhibiting phosphorylation by inhibitory kinases such as EIF2AK2/PKR and EIF2AK1/HCR. Plays a critical role in the regulation of protein synthesis. This Bos taurus (Bovine) protein is Methionine aminopeptidase 2.